A 425-amino-acid polypeptide reads, in one-letter code: Adenylosuccinate synthetase (425 aa).

GTP-binding positions include 12 to 18 (GDEGKGK) and 40 to 42 (GHT). Aspartate 13 functions as the Proton acceptor in the catalytic mechanism. The Mg(2+) site is built by aspartate 13 and glycine 40. IMP contacts are provided by residues 13–16 (DEGK), 38–41 (NAGH), threonine 129, arginine 143, asparagine 221, threonine 236, and arginine 300. Residue histidine 41 is the Proton donor of the active site. 296-302 (VTTGRKR) is a substrate binding site. GTP-binding positions include arginine 302, 328 to 330 (KLD), and 410 to 412 (GVG).

This sequence belongs to the adenylosuccinate synthetase family. In terms of assembly, homodimer. The cofactor is Mg(2+).

Its subcellular location is the cytoplasm. It catalyses the reaction IMP + L-aspartate + GTP = N(6)-(1,2-dicarboxyethyl)-AMP + GDP + phosphate + 2 H(+). It functions in the pathway purine metabolism; AMP biosynthesis via de novo pathway; AMP from IMP: step 1/2. Plays an important role in the de novo pathway and in the salvage pathway of purine nucleotide biosynthesis. Catalyzes the first committed step in the biosynthesis of AMP from IMP. The chain is Adenylosuccinate synthetase from Phaeosphaeria nodorum (strain SN15 / ATCC MYA-4574 / FGSC 10173) (Glume blotch fungus).